We begin with the raw amino-acid sequence, 284 residues long: Stomatin (284 aa).

At 1–31 (MSDKRQSSHVQSQRIPESFRENSKTELGACG) the chain is on the cytoplasmic side. S18 carries the phosphoserine modification. A lipid anchor (S-palmitoyl cysteine) is attached at C30. The stretch at 32 to 52 (WILVAASFFFVIITFPISIWI) is an intramembrane region. The Cytoplasmic segment spans residues 53–284 (CIKIVKEYER…MLQGIMGSNH (232 aa)). C87 carries S-palmitoyl cysteine lipidation. Phosphoserine is present on residues S161 and S244. The segment at 265-273 (STIVFPLPV) is required for homooligomerization. A required for lipid raft association region spans residues 267–269 (IVF). Positions 273-284 (VDMLQGIMGSNH) are interaction with LANCL1.

It belongs to the band 7/mec-2 family. As to quaternary structure, interacts with LANCL1. Interacts with SLC2A1. Interacts with SLC4A1; this interaction positively regulates SLC4A1 activity. Identified in large complexes with SLC40A1, SLC14A1, SLC29A1 and AQP1. Homodimer and higher order homooligomers. The homodimer is banana-shaped. Interacts with ASIC1, ASIC2 and ASIC3. Interacts with STOML1; may redistribute STOM from the plasma membrane to late endosomes. Expressed in all sensory neurons of the dorsal root ganglia. In the CNS, expressed in many neurons of the spinal cord, medulla and pons. Expressed only in scattered neurons in the cortex, hippocampus, thalamus and basal ganglia. In the cerebellum, expressed in all Purkinje cells (at protein level). Widely expressed with high levels in heart, liver, skeletal muscle and testis and low levels in lung, brain and spleen.

The protein resides in the cell membrane. It is found in the cytoplasm. The protein localises to the cytoskeleton. It localises to the membrane raft. Its subcellular location is the melanosome. The protein resides in the cytoplasmic vesicle. Its function is as follows. Regulates ion channel activity and transmembrane ion transport. Regulates ASIC2 and ASIC3 channel activity. This Mus musculus (Mouse) protein is Stomatin.